Reading from the N-terminus, the 208-residue chain is dITP/XTP pyrophosphatase (208 aa).

11–16 (TGNAKK) serves as a coordination point for substrate. Catalysis depends on Asp-73, which acts as the Proton acceptor. Asp-73 provides a ligand contact to Mg(2+). Substrate is bound by residues Ser-74, 157-160 (FGYD), Lys-180, and 185-186 (HR).

This sequence belongs to the HAM1 NTPase family. Homodimer. It depends on Mg(2+) as a cofactor.

The catalysed reaction is XTP + H2O = XMP + diphosphate + H(+). It carries out the reaction dITP + H2O = dIMP + diphosphate + H(+). The enzyme catalyses ITP + H2O = IMP + diphosphate + H(+). Pyrophosphatase that catalyzes the hydrolysis of nucleoside triphosphates to their monophosphate derivatives, with a high preference for the non-canonical purine nucleotides XTP (xanthosine triphosphate), dITP (deoxyinosine triphosphate) and ITP. Seems to function as a house-cleaning enzyme that removes non-canonical purine nucleotides from the nucleotide pool, thus preventing their incorporation into DNA/RNA and avoiding chromosomal lesions. This Rhodopirellula baltica (strain DSM 10527 / NCIMB 13988 / SH1) protein is dITP/XTP pyrophosphatase.